We begin with the raw amino-acid sequence, 370 residues long: Mitogen-activated protein kinase 3 (370 aa).

The Protein kinase domain maps to Y32–M319. Residues I38–V46 and K61 each bind ATP. The Proton acceptor role is filled by D158. The residue at position 191 (T191) is a Phosphothreonine. Positions T191–Y193 match the TXY motif. Y193 is subject to Phosphotyrosine.

It belongs to the protein kinase superfamily. CMGC Ser/Thr protein kinase family. MAP kinase subfamily. Post-translationally, dually phosphorylated on Thr-191 and Tyr-193, which activates the enzyme.

The enzyme catalyses L-seryl-[protein] + ATP = O-phospho-L-seryl-[protein] + ADP + H(+). It catalyses the reaction L-threonyl-[protein] + ATP = O-phospho-L-threonyl-[protein] + ADP + H(+). Activated by threonine and tyrosine phosphorylation. This Oryza sativa subsp. japonica (Rice) protein is Mitogen-activated protein kinase 3 (MPK3).